The following is a 383-amino-acid chain: Corticosteroid-binding globulin (383 aa).

N-linked (GlcNAc...) asparagine glycans are attached at residues Asn-74 and Asn-154. Gln-232 serves as a coordination point for cortisol. Asn-238 is a glycosylation site (N-linked (GlcNAc...) asparagine). Gln-264 is a cortisol binding site. The N-linked (GlcNAc...) asparagine glycan is linked to Asn-308. Trp-371 is a binding site for cortisol.

It belongs to the serpin family. In terms of tissue distribution, produced and secreted by hepatocytes, but has also been identified in a number of glycocorticoid responsive cells (it is found in maternal lung, spleen, and ovary and fetal kidney).

The protein localises to the secreted. In terms of biological role, major transport protein for glucocorticoids and progestins in the blood of almost all vertebrate species. This is Corticosteroid-binding globulin (SERPINA6) from Oryctolagus cuniculus (Rabbit).